We begin with the raw amino-acid sequence, 164 residues long: Transcription elongation factor GreA (164 aa).

The stretch at 50–76 (YHAAREEQGQQEARIRQLQELLNNAKV) forms a coiled coil.

Belongs to the GreA/GreB family.

Necessary for efficient RNA polymerase transcription elongation past template-encoded arresting sites. The arresting sites in DNA have the property of trapping a certain fraction of elongating RNA polymerases that pass through, resulting in locked ternary complexes. Cleavage of the nascent transcript by cleavage factors such as GreA or GreB allows the resumption of elongation from the new 3'terminus. GreA releases sequences of 2 to 3 nucleotides. The protein is Transcription elongation factor GreA of Mycolicibacterium smegmatis (strain ATCC 700084 / mc(2)155) (Mycobacterium smegmatis).